Here is a 481-residue protein sequence, read N- to C-terminus: Ammonium transporter 2 member 3 (481 aa).

At 1–36 the chain is on the extracellular side; sequence MNFNSSKYISHLPESLLPNDASPEWNNKADNAWQLT. An N-linked (GlcNAc...) asparagine glycan is attached at Asn-4. The helical transmembrane segment at 37–57 threads the bilayer; the sequence is AATLVGLQTVPGLVILYGSMV. Residues 58–62 are Cytoplasmic-facing; it reads KKKWA. Residues 63–83 form a helical membrane-spanning segment; the sequence is VNSAFMALYAFAAVLVCWVLW. At 84-123 the chain is on the extracellular side; it reads AHHMAFGTKLLPFVGKPNFALSQKFLLSKASTNYYLPMAD. Residues 124–144 traverse the membrane as a helical segment; that stretch reads FVFYQFAFAAITLVLLGGSLL. The Cytoplasmic segment spans residues 145 to 151; the sequence is GRMNFYA. A helical membrane pass occupies residues 152–172; the sequence is WMLFVPLWLTLSYTVGAFTIW. Topologically, residues 173–184 are extracellular; the sequence is GNGFLEGKIIDY. The chain crosses the membrane as a helical span at residues 185–205; the sequence is AGGFVIHLSSGVAGFTAAYWV. Residues 206–220 are Cytoplasmic-facing; it reads GPRTSNDRQNFPPNN. A helical transmembrane segment spans residues 221–241; it reads IIHMLGGAGFLWMGWTGFNGG. Over 242–248 the chain is Extracellular; the sequence is APFQVGE. The chain crosses the membrane as a helical span at residues 249–269; that stretch reads ITSLAIFNTHLCTATSILVWI. At 270–281 the chain is on the cytoplasmic side; it reads SLDMAVYKKGSL. The helical transmembrane segment at 282-302 threads the bilayer; the sequence is IGSVQGMMTGLVCITPGAGLV. Residues 303-304 lie on the Extracellular side of the membrane; the sequence is DP. Residues 305 to 325 traverse the membrane as a helical segment; it reads WAAILMGALSGSIPWYTMMVL. The Cytoplasmic segment spans residues 326-338; the sequence is HKKSPFFQSVDDT. The helical transmembrane segment at 339-359 threads the bilayer; sequence LGVFHTHAVAGILGGILSGVF. Topologically, residues 360 to 363 are extracellular; sequence AKPK. Residues 364 to 381 traverse the membrane as a helical segment; it reads LLRILYGPYGSGLLYSYF. The Cytoplasmic segment spans residues 382 to 395; the sequence is DDNIGQGIKQMWYQ. A helical transmembrane segment spans residues 396–416; that stretch reads LLGAVFITIWNVVITSLICIL. The Extracellular segment spans residues 417–481; the sequence is LNRFVNLRMQ…HSFPINKIDE (65 aa).

Belongs to the ammonia transporter channel (TC 1.A.11.2) family. Mostly expressed in mycorrhizal roots. Also observed in the cortex and endodermis of non-mycorrhizal roots.

It is found in the cell membrane. Its function is as follows. Involved in ammonium transport. Required for arbuscular mycorrhizal (AM) symbiosis with AM fungi (e.g. Glomus versiforme and G.intraradices) in low nitrogen conditions. In Medicago truncatula (Barrel medic), this protein is Ammonium transporter 2 member 3.